Consider the following 101-residue polypeptide: Stefin-C (101 aa).

N-acetylmethionine is present on Met1. The Secondary area of contact motif lies at 49–53; sequence QVVAG.

This sequence belongs to the cystatin family.

Its subcellular location is the cytoplasm. Strong inhibitor of papain and cathepsin L but poor inhibitor of cathepsin B. In Bos taurus (Bovine), this protein is Stefin-C.